The sequence spans 374 residues: Chaperone protein DnaJ (374 aa).

A J domain is found at Asp-5 to Gly-69. A CR-type zinc finger spans residues Gly-141–Arg-223. Positions 154, 157, 171, 174, 197, 200, 211, and 214 each coordinate Zn(2+). CXXCXGXG motif repeat units follow at residues Cys-154–Gly-161, Cys-171–Gly-178, Cys-197–Gly-204, and Cys-211–Gly-218.

It belongs to the DnaJ family. Homodimer. Zn(2+) serves as cofactor.

The protein resides in the cytoplasm. Functionally, participates actively in the response to hyperosmotic and heat shock by preventing the aggregation of stress-denatured proteins and by disaggregating proteins, also in an autonomous, DnaK-independent fashion. Unfolded proteins bind initially to DnaJ; upon interaction with the DnaJ-bound protein, DnaK hydrolyzes its bound ATP, resulting in the formation of a stable complex. GrpE releases ADP from DnaK; ATP binding to DnaK triggers the release of the substrate protein, thus completing the reaction cycle. Several rounds of ATP-dependent interactions between DnaJ, DnaK and GrpE are required for fully efficient folding. Also involved, together with DnaK and GrpE, in the DNA replication of plasmids through activation of initiation proteins. In Mesoplasma florum (strain ATCC 33453 / NBRC 100688 / NCTC 11704 / L1) (Acholeplasma florum), this protein is Chaperone protein DnaJ.